The following is a 231-amino-acid chain: Ribonuclease 3 (231 aa).

In terms of domain architecture, RNase III spans 6 to 135 (AAMLKERFGI…FVGALYLDQG (130 aa)). Glu48 contacts Mg(2+). The active site involves Asp52. Residues Asp121 and Glu124 each contribute to the Mg(2+) site. Glu124 is a catalytic residue. The 70-residue stretch at 161-230 (DYKTTLQEYL…ARQAYSQLQQ (70 aa)) folds into the DRBM domain. The disordered stretch occupies residues 209–231 (WGHSKKEAEQSAARQAYSQLQQK). The span at 220-231 (AARQAYSQLQQK) shows a compositional bias: polar residues.

Belongs to the ribonuclease III family. In terms of assembly, homodimer. Mg(2+) is required as a cofactor.

It is found in the cytoplasm. It catalyses the reaction Endonucleolytic cleavage to 5'-phosphomonoester.. In terms of biological role, digests double-stranded RNA. Involved in the processing of primary rRNA transcript to yield the immediate precursors to the large and small rRNAs (23S and 16S). Processes some mRNAs, and tRNAs when they are encoded in the rRNA operon. Processes pre-crRNA and tracrRNA of type II CRISPR loci if present in the organism. The chain is Ribonuclease 3 from Lactiplantibacillus plantarum (strain ATCC BAA-793 / NCIMB 8826 / WCFS1) (Lactobacillus plantarum).